A 119-amino-acid polypeptide reads, in one-letter code: Methylglyoxal synthase (119 aa).

In terms of domain architecture, MGS-like spans 1-119; sequence MKIALIAHDK…ESAKLIMADI (119 aa). Substrate is bound by residues His-8, Lys-12, 34-37, and 54-55; these read TGTT and SG. The Proton donor/acceptor role is filled by Asp-60. His-87 provides a ligand contact to substrate.

It belongs to the methylglyoxal synthase family.

It catalyses the reaction dihydroxyacetone phosphate = methylglyoxal + phosphate. Catalyzes the formation of methylglyoxal from dihydroxyacetone phosphate. The sequence is that of Methylglyoxal synthase from Clostridium perfringens (strain 13 / Type A).